The following is a 359-amino-acid chain: Small ribosomal subunit protein mS22 (359 aa).

The interval 40 to 65 (RPQPFEVGQPRRLLSSEAESGSSEVK) is disordered. Position 54 is a phosphoserine (Ser-54). Lys-210 carries the post-translational modification N6-acetyllysine.

This sequence belongs to the mitochondrion-specific ribosomal protein mS22 family. Component of the mitochondrial ribosome small subunit (28S) which comprises a 12S rRNA and about 30 distinct proteins.

The protein localises to the mitochondrion. This Mus musculus (Mouse) protein is Small ribosomal subunit protein mS22 (Mrps22).